We begin with the raw amino-acid sequence, 63 residues long: uncharacterized protein (63 aa).

This is an uncharacterized protein from Dictyostelium discoideum (Social amoeba).